The primary structure comprises 208 residues: Uracil phosphoribosyltransferase (208 aa).

Residues R78, R103, and 130–138 each bind 5-phospho-alpha-D-ribose 1-diphosphate; that span reads DPMLATGGS. Residues I193 and 198–200 each bind uracil; that span reads GDA. D199 serves as a coordination point for 5-phospho-alpha-D-ribose 1-diphosphate.

This sequence belongs to the UPRTase family. Mg(2+) serves as cofactor.

It catalyses the reaction UMP + diphosphate = 5-phospho-alpha-D-ribose 1-diphosphate + uracil. Its pathway is pyrimidine metabolism; UMP biosynthesis via salvage pathway; UMP from uracil: step 1/1. Its activity is regulated as follows. Allosterically activated by GTP. Functionally, catalyzes the conversion of uracil and 5-phospho-alpha-D-ribose 1-diphosphate (PRPP) to UMP and diphosphate. The sequence is that of Uracil phosphoribosyltransferase from Salmonella agona (strain SL483).